Here is a 150-residue protein sequence, read N- to C-terminus: Large ribosomal subunit protein uL15 (150 aa).

Residues 1 to 52 (MDLSNLKPAEGSVRKNSKRIGRGEGSGKGGTATRGHKGAKSRSGYSKKIGFE) are disordered. The span at 23–32 (GEGSGKGGTA) shows a compositional bias: gly residues.

It belongs to the universal ribosomal protein uL15 family. Part of the 50S ribosomal subunit.

Binds to the 23S rRNA. This chain is Large ribosomal subunit protein uL15, found in Christiangramia forsetii (strain DSM 17595 / CGMCC 1.15422 / KT0803) (Gramella forsetii).